A 172-amino-acid polypeptide reads, in one-letter code: NADH-quinone oxidoreductase subunit B (172 aa).

Cys-46, Cys-47, Cys-111, and Cys-141 together coordinate [4Fe-4S] cluster.

Belongs to the complex I 20 kDa subunit family. NDH-1 is composed of 14 different subunits. Subunits NuoB, C, D, E, F, and G constitute the peripheral sector of the complex. The cofactor is [4Fe-4S] cluster.

It localises to the cell membrane. The enzyme catalyses a quinone + NADH + 5 H(+)(in) = a quinol + NAD(+) + 4 H(+)(out). Its function is as follows. NDH-1 shuttles electrons from NADH, via FMN and iron-sulfur (Fe-S) centers, to quinones in the respiratory chain. The immediate electron acceptor for the enzyme in this species is believed to be a menaquinone. Couples the redox reaction to proton translocation (for every two electrons transferred, four hydrogen ions are translocated across the cytoplasmic membrane), and thus conserves the redox energy in a proton gradient. This chain is NADH-quinone oxidoreductase subunit B, found in Brevibacillus brevis (strain 47 / JCM 6285 / NBRC 100599).